We begin with the raw amino-acid sequence, 107 residues long: Essential MCU regulator, mitochondrial (107 aa).

Residues 1–47 constitute a mitochondrion transit peptide; sequence MASTAARRLAWVAVRPGALWSGPRGRRGGDVYTVPGSSGLSQVPSRS. Over 48–65 the chain is Mitochondrial matrix; sequence VIVTRSGAILPKPVKMSF. The helical transmembrane segment at 66–85 threads the bilayer; that stretch reads GLLRVFSIVIPFLYVGTLIS. Positions 81 to 85 match the GXXXX[G/A/S] motif; it reads GTLIS. Topologically, residues 86–107 are mitochondrial intermembrane; it reads KNFAALLEEHDIFVPEDDDDDD.

This sequence belongs to the SMDT1/EMRE family. Component of the uniplex complex, composed of MCU, EMRE/SMDT1, MICU1 and MICU2 (or MICU3) in a 4:4:1:1 stoichiometry. The number of EMRE/SMDT1 molecules is hovewer variable, ranging from 1 to 4 copies per uniplex complex, leading to uniplex complexes with distinct gatekeeping profiles. Interacts (via its C-terminal poly-Asp tail) with MCUR1; the interaction is direct. Unprocessed form interacts (via transit peptide) with MAIP1. In terms of processing, undergoes proteolytic degradation in neurons: degraded by AFG3L2 and SPG7 before SMDT1/EMRE assembly with the uniporter complex, limiting the availability of SMDT1/EMRE for MCU assembly and promoting efficient assembly of gatekeeper subunits with MCU. In terms of tissue distribution, widely expressed.

It is found in the mitochondrion inner membrane. In terms of biological role, essential regulatory subunit of the mitochondrial calcium uniporter complex (uniplex), a complex that mediates calcium uptake into mitochondria. Required to bridge the calcium-sensing proteins MICU1 with the calcium-conducting subunit MCU. Acts by mediating activation of MCU and retention of MICU1 to the MCU pore, in order to ensure tight regulation of the uniplex complex and appropriate responses to intracellular calcium signaling. This Mus musculus (Mouse) protein is Essential MCU regulator, mitochondrial.